We begin with the raw amino-acid sequence, 502 residues long: MSDQNNTPAASQDENHIISERREKLAAWRAGGRAFPNDFSRENIAGKLDEIYGEKESQELDATPVEVKVAGRIMLKRVMGKASFMTIQDLSGQIQLYVTRDAVGEDVYADFKHWDIGDIVGAVGTLFKTRTGELSVKCTDIRLLTKSLRPLPDKFHGLTDVEQKYRQRHLDLIMNEQTRFTFVARSRMVQSIRNYMVSHGFLEVETPMMHPIPGGAAAKPFTTHHNALDMELFLRIAPELYLKRLVVGGFEKVFEVNRNFRNEGLSPRHNPEFTMMEFYEAYANYKSLMNFTEGLLRQAAREALGTEVFVYQGRELDLSKPFARLTIVEAIHQFHPGFSIAQLNDEAWLRAKLTDLKAKLRDDAGLGTLQLMLFEETTEAELWEPTFIIDYPAEVSPLARRNDANPEITERFELFIVGREIANGFSELNDPEDQAARFLEQVKAKEAGDEEAMFYDADYIRALEYGLPPTGGCGIGIDRLVMLLTDSPSIRDVILFPQMRTE.

Mg(2+)-binding residues include E413 and E420.

Belongs to the class-II aminoacyl-tRNA synthetase family. As to quaternary structure, homodimer. Mg(2+) serves as cofactor.

It localises to the cytoplasm. It carries out the reaction tRNA(Lys) + L-lysine + ATP = L-lysyl-tRNA(Lys) + AMP + diphosphate. The chain is Lysine--tRNA ligase from Aromatoleum aromaticum (strain DSM 19018 / LMG 30748 / EbN1) (Azoarcus sp. (strain EbN1)).